A 78-amino-acid chain; its full sequence is uncharacterized protein (78 aa).

2 consecutive transmembrane segments (helical) span residues 12–32 and 51–71; these read LVSVMGMGMVFAFLLLLICVV and GVGAAVPAGGALAAAIAVAVH.

It localises to the cell membrane. This is an uncharacterized protein from Treponema pallidum (strain Nichols).